Consider the following 32-residue polypeptide: Delta-actitoxin-Eqd1a (32 aa).

This sequence belongs to the sea anemone short toxin (type III) family. Post-translationally, contains 4 disulfide bonds.

The protein localises to the secreted. It localises to the nematocyst. Its function is as follows. Binds specifically to sodium channels (Nav) of the axonal membrane of crayfish and prolongs the falling phase of the action potential. It also increases the maximum rates of rise of both action potential and resting potential. Is only active on crustaceans. This Entacmaea quadricolor (Bubble-tip anemone) protein is Delta-actitoxin-Eqd1a.